Consider the following 269-residue polypeptide: Energy-coupling factor transporter ATP-binding protein EcfA1 (269 aa).

The region spanning 8 to 242 (IVFKNVSFQY…AEELTTIGLD (235 aa)) is the ABC transporter domain. 42 to 49 (GHNGSGKS) is a binding site for ATP.

The protein belongs to the ABC transporter superfamily. Energy-coupling factor EcfA family. Forms a stable energy-coupling factor (ECF) transporter complex composed of 2 membrane-embedded substrate-binding proteins (S component), 2 ATP-binding proteins (A component) and 2 transmembrane proteins (T component).

The protein resides in the cell membrane. ATP-binding (A) component of a common energy-coupling factor (ECF) ABC-transporter complex. Unlike classic ABC transporters this ECF transporter provides the energy necessary to transport a number of different substrates. The sequence is that of Energy-coupling factor transporter ATP-binding protein EcfA1 from Staphylococcus aureus (strain MRSA252).